A 440-amino-acid polypeptide reads, in one-letter code: Phosphoglucosamine mutase (440 aa).

The Phosphoserine intermediate role is filled by Ser-97. Residues Ser-97, Asp-237, Asp-239, and Asp-241 each contribute to the Mg(2+) site. Position 97 is a phosphoserine (Ser-97).

It belongs to the phosphohexose mutase family. Mg(2+) serves as cofactor. In terms of processing, activated by phosphorylation.

It catalyses the reaction alpha-D-glucosamine 1-phosphate = D-glucosamine 6-phosphate. In terms of biological role, catalyzes the conversion of glucosamine-6-phosphate to glucosamine-1-phosphate. The chain is Phosphoglucosamine mutase from Nautilia profundicola (strain ATCC BAA-1463 / DSM 18972 / AmH).